Here is a 337-residue protein sequence, read N- to C-terminus: Serpentine receptor class delta-18 (337 aa).

6 consecutive transmembrane segments (helical) span residues 2-22, 90-110, 130-150, 187-207, 236-256, and 270-290; these read IIFF…LNLL, VGLS…LLSF, LILV…TIFA, IYSI…IFIL, ALTI…FYFL, and SIYA…LYFV.

The protein belongs to the nematode receptor-like protein srd family.

Its subcellular location is the membrane. In Caenorhabditis elegans, this protein is Serpentine receptor class delta-18 (srd-18).